The sequence spans 861 residues: Protein argonaute-4 (861 aa).

Residues 219–338 form the PAZ domain; the sequence is PIIEFMCEVL…LPLEVCNIVA (120 aa). The Piwi domain occupies 509–820; it reads LIVVILPGKT…VAFRARYHLV (312 aa). Residues 825–846 form a disordered region; the sequence is DSAEGSHVSGQSNGRDPQALAK.

It belongs to the argonaute family. Ago subfamily. Interacts with EIF4B, IMP8, PRMT5, TNRC6A and TNRC6B. Interacts with ZFP36. In terms of processing, ubiquitinated on surface-exposed lysines by a SCF-like E3 ubiquitin-protein ligase complex containing ZSWIM8 during target-directed microRNA degradation (TDMD), a process that mediates degradation of microRNAs (miRNAs). Ubiquitination by the SCF-like E3 ubiquitin-protein ligase complex containing ZSWIM8 leads to its subsequent degradation, thereby exposing miRNAs for degradation. ZSWIM8 recognizes and binds AGO4 when it is engaged with a TDMD target.

The protein localises to the cytoplasm. Its subcellular location is the P-body. Functionally, required for RNA-mediated gene silencing (RNAi). Binds to short RNAs such as microRNAs (miRNAs) and represses the translation of mRNAs which are complementary to them. Lacks endonuclease activity and does not appear to cleave target mRNAs. Also required for RNA-directed transcription and replication of the human hapatitis delta virus (HDV). The polypeptide is Protein argonaute-4 (AGO4) (Homo sapiens (Human)).